The chain runs to 963 residues: Spliceosome associated factor 3, U4/U6 recycling protein (963 aa).

Positions 1–11 are enriched in low complexity; the sequence is MATAAETSASE. 2 disordered regions span residues 1 to 36 and 50 to 90; these read MATA…RTRR and TMGP…YDEE. At A2 the chain carries N-acetylalanine. The mediates interaction with PRPF3 stretch occupies residues 2 to 351; the sequence is ATAAETSASE…LVPDLWIRYS (350 aa). Phosphoserine is present on residues S10 and S16. Positions 14-23 are enriched in basic and acidic residues; that stretch reads AESKAGPKAD. Positions 21-46 form a coiled coil; that stretch reads KADGEEDEVKAARTRRKVLSRAVAAA. The segment covering 57 to 69 has biased composition (acidic residues); that stretch reads QQEEGVSESDGDE. Residues 82–110 are a coiled coil; the sequence is EYEWEYDEEEEKNQLEIERLEEQLSINVY. 8 HAT repeats span residues 126 to 158, 164 to 195, 201 to 237, 242 to 275, 324 to 356, 359 to 391, 394 to 430, and 487 to 520; these read GELT…DEIS, LDRE…YSVG, GGLE…FESA, ARLE…WSED, GDPA…YLDR, KVKD…AMER, VDHQ…YLRR, and NNMQ…LERA. Position 215 is a phosphoserine (S215). Residues 487–520 are required for interaction with USP4; sequence NNMQKARELWDSIMTRGNAKYANMWLEYYNLERA. A necessary and sufficient for U6 snRNA binding region spans residues 537–953; sequence CTSDYPEHVC…AATEAPKMSN (417 aa). Residues 559–619 adopt a coiled-coil conformation; sequence LEDWDIAVQK…ALKKKKKIRG (61 aa). A compositionally biased stretch (basic and acidic residues) spans 590 to 601; the sequence is LVQQEEEKAEQR. The segment at 590-694 is disordered; it reads LVQQEEEKAE…AASLKRDMPK (105 aa). The segment at 600 to 670 is required for nuclear localization; the sequence is QRKRARAEKK…EVAAGPAGKC (71 aa). A Nuclear localization signal motif is present at residues 601–608; that stretch reads RKRARAEK. The span at 602-617 shows a compositional bias: basic residues; it reads KRARAEKKALKKKKKI. Residues 626–639 are compositionally biased toward acidic residues; sequence DEDDEKEWGDDEEE. Phosphoserine is present on S650. T657 is subject to Phosphothreonine. Residues 677–694 are compositionally biased toward basic and acidic residues; that stretch reads PPSKQKEKAASLKRDMPK. The region spanning 704–782 is the RRM 1 domain; it reads ITVFVSNLPY…RPMFVSPCVD (79 aa). 3 positions are modified to phosphoserine: S769, S795, and S852. The region spanning 801–878 is the RRM 2 domain; that stretch reads HKLFISGLPF…NIIKVAISNP (78 aa). The disordered stretch occupies residues 878 to 898; it reads PPQRKVPEKPETRKAPGGPML. Residues 882–891 are compositionally biased toward basic and acidic residues; the sequence is KVPEKPETRK. Omega-N-methylarginine is present on R906. Residues 920-948 form a disordered region; sequence LQRPSAAAPQAENGPAAAPAVAAPAATEA. Low complexity predominate over residues 925-948; sequence AAAPQAENGPAAAPAVAAPAATEA.

In terms of assembly, component of the 7SK snRNP complex at least composed of P-TEFb (composed of CDK9 and CCNT1/cyclin-T1), HEXIM1, HEXIM2, BCDIN3, SART3 proteins and 7SK and U6 snRNAs. Interacts with AGO1 and AGO2. Interacts with PRPF3 and USP4; the interaction with PRPF3 is direct and recruits USP4 to its substrate PRPF3. Interacts with USP15; the interaction is direct. Interacts with HIV-1 Tat. Ubiquitously expressed.

Its subcellular location is the nucleus. It is found in the nucleoplasm. It localises to the cajal body. The protein localises to the nucleus speckle. The protein resides in the cytoplasm. U6 snRNP-binding protein that functions as a recycling factor of the splicing machinery. Promotes the initial reassembly of U4 and U6 snRNPs following their ejection from the spliceosome during its maturation. Also binds U6atac snRNPs and may function as a recycling factor for U4atac/U6atac spliceosomal snRNP, an initial step in the assembly of U12-type spliceosomal complex. The U12-type spliceosomal complex plays a role in the splicing of introns with non-canonical splice sites. May also function as a substrate-targeting factor for deubiquitinases like USP4 and USP15. Recruits USP4 to ubiquitinated PRPF3 within the U4/U5/U6 tri-snRNP complex, promoting PRPF3 deubiquitination and thereby regulating the spliceosome U4/U5/U6 tri-snRNP spliceosomal complex disassembly. May also recruit the deubiquitinase USP15 to histone H2B and mediate histone deubiquitination, thereby regulating gene expression and/or DNA repair. May play a role in hematopoiesis probably through transcription regulation of specific genes including MYC. Its function is as follows. Regulates Tat transactivation activity through direct interaction. May be a cellular factor for HIV-1 gene expression and viral replication. This is Spliceosome associated factor 3, U4/U6 recycling protein from Homo sapiens (Human).